A 309-amino-acid chain; its full sequence is Golgi-associated RAB2 interactor protein 1A (309 aa).

A phosphoserine mark is found at Ser-231, Ser-263, and Ser-267.

It belongs to the GARIN family. In terms of assembly, interacts (via N-terminus) with RAB2B (in GTP-bound form).

It is found in the golgi apparatus. Its function is as follows. RAB2B effector protein required for accurate acrosome formation and normal male fertility. The chain is Golgi-associated RAB2 interactor protein 1A from Homo sapiens (Human).